Consider the following 88-residue polypeptide: Small integral membrane protein 13 (88 aa).

A helical membrane pass occupies residues 10–30 (LVFVATLLIVLLLMVCGWYFV). Residues 48–61 (TGSQEGDNEQPSGS) are compositionally biased toward polar residues. The disordered stretch occupies residues 48-88 (TGSQEGDNEQPSGSETEEDPSASPQKIRSARQRRPPVDAGH). Phosphoserine is present on residues Ser59 and Ser61. The residue at position 63 (Thr63) is a Phosphothreonine. Position 70 is a phosphoserine (Ser70).

This sequence belongs to the SMIM13 family.

It is found in the membrane. This is Small integral membrane protein 13 (Smim13) from Mus musculus (Mouse).